Reading from the N-terminus, the 359-residue chain is Peptide chain release factor 1 (359 aa).

Gln-236 carries the N5-methylglutamine modification.

Belongs to the prokaryotic/mitochondrial release factor family. In terms of processing, methylated by PrmC. Methylation increases the termination efficiency of RF1.

The protein localises to the cytoplasm. In terms of biological role, peptide chain release factor 1 directs the termination of translation in response to the peptide chain termination codons UAG and UAA. The chain is Peptide chain release factor 1 from Streptococcus pneumoniae serotype 19F (strain G54).